The primary structure comprises 133 residues: Large ribosomal subunit protein uL15 (133 aa).

The tract at residues 1–62 is disordered; that stretch reads MALHNLQPAP…GQQPLQRRLP (62 aa). Positions 32–45 are enriched in polar residues; that stretch reads TRGQKGQKSRTGYS.

It belongs to the universal ribosomal protein uL15 family. In terms of assembly, part of the 50S ribosomal subunit.

Functionally, binds to the 23S rRNA. The polypeptide is Large ribosomal subunit protein uL15 (Nitratiruptor sp. (strain SB155-2)).